The primary structure comprises 274 residues: Sulfur carrier protein FdhD (274 aa).

The active-site Cysteine persulfide intermediate is cysteine 121. 258–263 (FSKPGR) is a Mo-bis(molybdopterin guanine dinucleotide) binding site.

This sequence belongs to the FdhD family.

Its subcellular location is the cytoplasm. In terms of biological role, required for formate dehydrogenase (FDH) activity. Acts as a sulfur carrier protein that transfers sulfur from IscS to the molybdenum cofactor prior to its insertion into FDH. This is Sulfur carrier protein FdhD from Yersinia pestis bv. Antiqua (strain Antiqua).